The following is a 644-amino-acid chain: Translation factor GUF1, mitochondrial (644 aa).

Residues 1 to 14 constitute a mitochondrion transit peptide; sequence MLRKAFRYLVPVRC. A tr-type G domain is found at 46–227; it reads ERYRNFSIVA…AIVDRIPPPT (182 aa). GTP-binding positions include 55-62, 120-124, and 174-177; these read AHVDHGKS, DTPGH, and NKID.

It belongs to the TRAFAC class translation factor GTPase superfamily. Classic translation factor GTPase family. LepA subfamily.

The protein localises to the mitochondrion inner membrane. It carries out the reaction GTP + H2O = GDP + phosphate + H(+). Its function is as follows. Promotes mitochondrial protein synthesis. May act as a fidelity factor of the translation reaction, by catalyzing a one-codon backward translocation of tRNAs on improperly translocated ribosomes. Binds to mitochondrial ribosomes in a GTP-dependent manner. In Eremothecium gossypii (strain ATCC 10895 / CBS 109.51 / FGSC 9923 / NRRL Y-1056) (Yeast), this protein is Translation factor GUF1, mitochondrial.